Reading from the N-terminus, the 138-residue chain is uncharacterized protein (138 aa).

The helical transmembrane segment at 19–40 threads the bilayer; that stretch reads ECKVSVISFFLLAFLLMAHIWL. Repeat copies occupy residues 94-106, 107-119, and 120-132. A 3 X 13 AA tandem repeats of K-G-E-I-E-G-K-E-E-K-K-E-[GV] region spans residues 94–132; sequence KGEIEGKEEKKEGKGEIEGKEEKKEGKGEIEGKEEKKEV. The tract at residues 98–138 is disordered; the sequence is EGKEEKKEGKGEIEGKEEKKEGKGEIEGKEEKKEVENGPRK.

In terms of tissue distribution, expressed in roots, leaves and flowers.

It is found in the mitochondrion membrane. Functionally, involved in cytoplasmic male sterility (CMS) by leading to pollen abortion. Not expressed in fertile (normal) plants. This is an uncharacterized protein from Raphanus sativus (Radish).